A 425-amino-acid chain; its full sequence is Tryptophan synthase beta chain (425 aa).

At lysine 107 the chain carries N6-(pyridoxal phosphate)lysine.

The protein belongs to the TrpB family. As to quaternary structure, tetramer of two alpha and two beta chains. Requires pyridoxal 5'-phosphate as cofactor.

The enzyme catalyses (1S,2R)-1-C-(indol-3-yl)glycerol 3-phosphate + L-serine = D-glyceraldehyde 3-phosphate + L-tryptophan + H2O. The protein operates within amino-acid biosynthesis; L-tryptophan biosynthesis; L-tryptophan from chorismate: step 5/5. The beta subunit is responsible for the synthesis of L-tryptophan from indole and L-serine. The polypeptide is Tryptophan synthase beta chain (Synechococcus sp. (strain JA-2-3B'a(2-13)) (Cyanobacteria bacterium Yellowstone B-Prime)).